Consider the following 455-residue polypeptide: Golgi pH regulator (455 aa).

The next 2 helical transmembrane spans lie at 5–25 (IDSS…WLFF) and 46–66 (VTFA…LGVL). N-linked (GlcNAc...) asparagine glycosylation occurs at asparagine 67. A run of 3 helical transmembrane segments spans residues 79–99 (LCVI…YFVV), 111–131 (LFAC…GDPF), and 150–170 (VGVI…VNCP). N-linked (GlcNAc...) asparagine glycosylation is found at asparagine 180 and asparagine 243. Helical transmembrane passes span 290–310 (GYFF…NIVF), 343–363 (ISFI…LITL), 378–398 (VIVL…VLLI), and 425–445 (WFDV…YLAH).

This sequence belongs to the Golgi pH regulator (TC 1.A.38) family. Homotrimer.

It localises to the golgi apparatus membrane. It carries out the reaction iodide(out) = iodide(in). The catalysed reaction is chloride(in) = chloride(out). It catalyses the reaction bromide(in) = bromide(out). The enzyme catalyses fluoride(in) = fluoride(out). In terms of biological role, voltage-gated channel that enables the transfer of anions such as iodide, chloride, bromide and fluoride which may function in counter-ion conductance and participates in Golgi acidification. This Gallus gallus (Chicken) protein is Golgi pH regulator.